The following is a 369-amino-acid chain: Transforming protein Maf (369 aa).

Disordered regions lie at residues 57–85 (STPM…TDQK) and 169–243 (GGAP…GLHF). A compositionally biased stretch (basic residues) spans 173–183 (HYHHHHHHPHH). Residues 184 to 193 (GGGGGGGGHP) are compositionally biased toward gly residues. The span at 194-211 (HGAAPGSAPPSSASSSAA) shows a compositional bias: low complexity. Residues 212–226 (GSGGGGGGGGGGAGG) are compositionally biased toward gly residues. The tract at residues 274-299 (RLKQKRRTLKNRGYAQSCRFKRVQQR) is basic motif. Positions 274–337 (RLKQKRRTLK…DAYKEKYEKL (64 aa)) constitute a bZIP domain. The tract at residues 302–323 (LESEKNQLLQQVEHLKQEISRL) is leucine-zipper. Residues 341–369 (GFRENGSSSDNPSSPEFFMYPRESSTTVM) are disordered. Positions 345–354 (NGSSSDNPSS) are enriched in polar residues.

The protein belongs to the bZIP family. Maf subfamily.

The protein resides in the host nucleus. Functionally, might be a transcriptional trans-activator. The sequence is that of Transforming protein Maf (V-MAF) from Galliformes.